Here is a 67-residue protein sequence, read N- to C-terminus: UPF0181 protein KPK_1966 (67 aa).

The tract at residues 48 to 67 (EQIVARFEDEDEDQDEDEDD) is disordered. Positions 55–67 (EDEDEDQDEDEDD) are enriched in acidic residues.

Belongs to the UPF0181 family.

The chain is UPF0181 protein KPK_1966 from Klebsiella pneumoniae (strain 342).